The following is a 505-amino-acid chain: Forkhead box protein O4 (505 aa).

The segment covering 1–10 has biased composition (polar residues); the sequence is MDPGNENSAT. 2 disordered regions span residues 1–100 and 176–246; these read MDPG…RRNA and SWWM…CSRN. T32 carries the phosphothreonine; by PKB/AKT1 modification. The segment covering 54-64 has biased composition (basic and acidic residues); it reads LGEKVHTEGRS. The fork-head DNA-binding region spans 100–188; that stretch reads AWGNQSYAEL…MLNPEGGKSG (89 aa). S197 is subject to Phosphoserine; by PKB/AKT1. Residues 205–216 show a composition bias toward basic residues; it reads LRGRSKAPKKKP. Position 262 is a phosphoserine; by PKB/AKT1 (S262).

Interacts with CREBBP/CBP, CTNNB1, MYOCD, SIRT1, SRF and YWHAZ. Acetylated by CREBBP/CBP and deacetylated by SIRT1. Binding of YWHAZ inhibits DNA-binding. Interacts with USP7; the interaction is enhanced in presence of hydrogen peroxide and occurs independently of TP53. Interacts with NLK, and this inhibits monoubiquitination and transcriptional activity. Interacts with FOXK1; the interaction inhibits MEF2C transactivation activity. Post-translationally, acetylation by CREBBP/CBP, which is induced by peroxidase stress, inhibits transcriptional activity. Deacetylation by SIRT1 is NAD-dependent and stimulates transcriptional activity. Phosphorylation by PKB/AKT1 inhibits transcriptional activity and is responsible for cytoplasmic localization. May be phosphorylated at multiple sites by NLK. In terms of processing, monoubiquitinated; monoubiquitination is induced by oxidative stress and reduced by deacetylase inhibitors; results in its relocalization to the nucleus and its increased transcriptional activity. Deubiquitinated by USP7; deubiquitination is induced by oxidative stress; enhances its interaction with USP7 and consequently, deubiquitination; increases its translocation to the cytoplasm and inhibits its transcriptional activity. Hydrogene-peroxide-induced ubiquitination and USP7-mediated deubiquitination have no major effect on its protein stability. Heart, brain, placenta, lung, liver, skeletal muscle, kidney and pancreas. Isoform zeta is most abundant in the liver, kidney, and pancreas.

The protein resides in the cytoplasm. The protein localises to the nucleus. Transcription factor involved in the regulation of the insulin signaling pathway. Binds to insulin-response elements (IREs) and can activate transcription of IGFBP1. Down-regulates expression of HIF1A and suppresses hypoxia-induced transcriptional activation of HIF1A-modulated genes. Also involved in negative regulation of the cell cycle. Involved in increased proteasome activity in embryonic stem cells (ESCs) by activating expression of PSMD11 in ESCs, leading to enhanced assembly of the 26S proteasome, followed by higher proteasome activity. This chain is Forkhead box protein O4 (FOXO4), found in Homo sapiens (Human).